The following is a 359-amino-acid chain: Fructose-bisphosphate aldolase 1 (359 aa).

Residue serine 50 participates in D-glyceraldehyde 3-phosphate binding. Aspartate 83 acts as the Proton donor in catalysis. Zn(2+) contacts are provided by histidine 84, aspartate 105, glutamate 142, and histidine 198. Glycine 199 is a dihydroxyacetone phosphate binding site. Histidine 232 serves as a coordination point for Zn(2+). Dihydroxyacetone phosphate-binding positions include 233-235 (GSS) and 275-278 (NIDT).

The protein belongs to the class II fructose-bisphosphate aldolase family. In terms of assembly, homodimer. Requires Zn(2+) as cofactor.

It catalyses the reaction beta-D-fructose 1,6-bisphosphate = D-glyceraldehyde 3-phosphate + dihydroxyacetone phosphate. The protein operates within carbohydrate biosynthesis; Calvin cycle. It functions in the pathway carbohydrate degradation; glycolysis; D-glyceraldehyde 3-phosphate and glycerone phosphate from D-glucose: step 4/4. Its function is as follows. Catalyzes the aldol condensation of dihydroxyacetone phosphate (DHAP or glycerone-phosphate) with glyceraldehyde 3-phosphate (G3P) to form fructose 1,6-bisphosphate (FBP) in gluconeogenesis and the reverse reaction in glycolysis. The polypeptide is Fructose-bisphosphate aldolase 1 (cfxA) (Cereibacter sphaeroides (Rhodobacter sphaeroides)).